The chain runs to 351 residues: Biotin synthase (351 aa).

A Radical SAM core domain is found at 49–265 (NRVRIHILDN…LSVFRLVNPD (217 aa)). Residues Cys64, Cys68, and Cys71 each coordinate [4Fe-4S] cluster. [2Fe-2S] cluster-binding residues include Cys108, Cys140, Cys200, and Arg269.

This sequence belongs to the radical SAM superfamily. Biotin synthase family. As to quaternary structure, homodimer. [4Fe-4S] cluster serves as cofactor. The cofactor is [2Fe-2S] cluster.

It catalyses the reaction (4R,5S)-dethiobiotin + (sulfur carrier)-SH + 2 reduced [2Fe-2S]-[ferredoxin] + 2 S-adenosyl-L-methionine = (sulfur carrier)-H + biotin + 2 5'-deoxyadenosine + 2 L-methionine + 2 oxidized [2Fe-2S]-[ferredoxin]. It functions in the pathway cofactor biosynthesis; biotin biosynthesis; biotin from 7,8-diaminononanoate: step 2/2. Catalyzes the conversion of dethiobiotin (DTB) to biotin by the insertion of a sulfur atom into dethiobiotin via a radical-based mechanism. This is Biotin synthase from Leptospira biflexa serovar Patoc (strain Patoc 1 / Ames).